Here is an 83-residue protein sequence, read N- to C-terminus: uncharacterized protein (83 aa).

The protein localises to the plastid. It is found in the chloroplast. This is an uncharacterized protein from Pinus thunbergii (Japanese black pine).